The chain runs to 237 residues: Sugar fermentation stimulation protein homolog (237 aa).

It belongs to the SfsA family.

In Pseudomonas syringae pv. tomato (strain ATCC BAA-871 / DC3000), this protein is Sugar fermentation stimulation protein homolog.